The sequence spans 227 residues: MDVFKQMSFKELMKVLGLGTVAFVLGVEWLNWLTRRLRDSRGPLKEVLFFPSPQVCVEHLFTSHRSFPCACPFPHGIQTSFSRLLEHLLSARTSLEMCIFSFSNMEMSRAILLLHKRGVVVRVVTDRDYMTITGSQIGALRKAGISVRHEMSSAVHMHHKFALVDGRKLISGSLNWTLTAVQSNKENVIITEEPELVRPFQQEFLKLWEASDPANLKLQSKNGQIKK.

Residues 1-14 (MDVFKQMSFKELMK) are Mitochondrial intermembrane-facing. A helical transmembrane segment spans residues 15–33 (VLGLGTVAFVLGVEWLNWL). Over 34-227 (TRRLRDSRGP…LQSKNGQIKK (194 aa)) the chain is Cytoplasmic. The PLD phosphodiesterase domain occupies 153 to 180 (SAVHMHHKFALVDGRKLISGSLNWTLTA). Active-site residues include His-158, Lys-160, and Asp-165.

Belongs to the phospholipase D family. MitoPLD/Zucchini subfamily. As to quaternary structure, homodimer.

The protein localises to the mitochondrion outer membrane. It carries out the reaction a cardiolipin + H2O = a 1,2-diacyl-sn-glycero-3-phospho-(1'-sn-glycerol) + a 1,2-diacyl-sn-glycero-3-phosphate + H(+). Presents phospholipase and nuclease activities, depending on the different physiological conditions. Plays a key role in mitochondrial fusion and fission via its phospholipase activity. In its phospholipase role, it uses the mitochondrial lipid cardiolipin as substrate to generate phosphatidate (PA or 1,2-diacyl-sn-glycero-3-phosphate), a second messenger signaling lipid. Production of PA facilitates Mitofusin-mediated fusion, whereas the cleavage of PA by the Lipin family of phosphatases produces diacylgycerol (DAG) which promotes mitochondrial fission. Regulates mitochondrial shape through facilitating mitochondrial fusion. During spermatogenesis, plays a critical role in PIWI-interacting RNA (piRNA) biogenesis. piRNAs provide essential protection against the activity of mobile genetic elements. piRNA-mediated transposon silencing is thus critical for maintaining genome stability, in particular in germline cells when transposons are mobilized as a consequence of wide-spread genomic demethylation. Has been shown to be a backbone-non-specific, single strand-specific nuclease, cleaving either RNA or DNA substrates with similar affinity. Produces 5' phosphate and 3' hydroxyl termini, suggesting it could directly participate in the processing of primary piRNA transcripts. Has been proposed to act as a cardiolipin hydrolase to generate phosphatidic acid at mitochondrial surface. Although it cannot be excluded that it can act as a phospholipase in some circumstances, this activity could not be confirmed. This is Mitochondrial cardiolipin hydrolase (pld6) from Danio rerio (Zebrafish).